The sequence spans 281 residues: Apulose-4-phosphate transketolase subunit A (281 aa).

Belongs to the transketolase family. As to quaternary structure, probable heterodimer composed of AptA and AptB. Thiamine diphosphate is required as a cofactor.

The catalysed reaction is apulose 4-phosphate + D-glyceraldehyde 3-phosphate = D-xylulose 5-phosphate + dihydroxyacetone phosphate. The protein operates within carbohydrate metabolism. Its function is as follows. Involved in catabolism of D-apiose. Catalyzes the transfer of the glycolaldehyde group from apulose-4-phosphate to D-glyceraldehyde 3-phosphate, generating dihydroxyacetone phosphate and D-xylulose-5-phosphate. The chain is Apulose-4-phosphate transketolase subunit A from Phocaeicola vulgatus (strain ATCC 8482 / DSM 1447 / JCM 5826 / CCUG 4940 / NBRC 14291 / NCTC 11154) (Bacteroides vulgatus).